The sequence spans 583 residues: Sensor protein SrrB (583 aa).

Residues 1 to 11 (MMSRLNSVVIK) lie on the Cytoplasmic side of the membrane. The chain crosses the membrane as a helical span at residues 12–32 (LWLTIILIVTTVLILLSIALI). The Extracellular portion of the chain corresponds to 33–174 (TFMQYYFTQE…SIEDTNNAIT (142 aa)). Residues 175–195 (IITIITAVIFLTITTVFAFFL) form a helical membrane-spanning segment. Over 196–583 (SSRITKPLRR…TFIIKLPKPE (388 aa)) the chain is Cytoplasmic. An HAMP domain is found at 197–249 (SRITKPLRRLRDQATRVSEGDYSYKPSVTTKDEIGQLSQAFNQMSTEIEEHVD). Positions 366 to 583 (NVSHELRTPI…TFIIKLPKPE (218 aa)) constitute a Histidine kinase domain. At H369 the chain carries Phosphohistidine; by autocatalysis.

It localises to the cell membrane. It catalyses the reaction ATP + protein L-histidine = ADP + protein N-phospho-L-histidine.. Its function is as follows. Member of the two-component regulatory system SrrA/SrrB, which is involved in the global regulation of staphylococcal virulence factors in response to environmental oxygen levels as well as biofilm formation. Also plays an essential role in host-derived nitric oxide resistance by regulating hmp/flavohemoglobin, an enzyme that detoxifies nitric oxide by converting it to nitrate. Functions as a sensor protein kinase which is autophosphorylated at a histidine residue and transfers its phosphate group to SrrA. In turn, SrrA binds to the upstream promoter regions of the target genes to positively and negatively regulate their expression. The polypeptide is Sensor protein SrrB (srrB) (Staphylococcus aureus (strain MRSA252)).